The chain runs to 929 residues: Pyruvate dehydrogenase E1 component (929 aa).

Lys-375 participates in a covalent cross-link: Isoglutamyl lysine isopeptide (Lys-Gln) (interchain with Q-Cter in protein Pup).

Homodimer. Part of the PDH complex, consisting of multiple copies of AceE (E1), DlaT (E2) and Lpd (E3). It depends on Mg(2+) as a cofactor. Requires thiamine diphosphate as cofactor.

The enzyme catalyses N(6)-[(R)-lipoyl]-L-lysyl-[protein] + pyruvate + H(+) = N(6)-[(R)-S(8)-acetyldihydrolipoyl]-L-lysyl-[protein] + CO2. Its function is as follows. Component of the pyruvate dehydrogenase (PDH) complex, that catalyzes the overall conversion of pyruvate to acetyl-CoA and CO(2). AceE has reductase activity with pyruvate but does not react with 2-oxoglutarate. The polypeptide is Pyruvate dehydrogenase E1 component (aceE) (Mycolicibacterium smegmatis (strain ATCC 700084 / mc(2)155) (Mycobacterium smegmatis)).